The following is a 190-amino-acid chain: Guanylate kinase (190 aa).

Positions 3–185 (NYIFIISAPS…SLEQLCKYFE (183 aa)) constitute a Guanylate kinase-like domain. 10 to 17 (APSGAGKS) is a binding site for ATP.

This sequence belongs to the guanylate kinase family.

It is found in the cytoplasm. The catalysed reaction is GMP + ATP = GDP + ADP. In terms of biological role, essential for recycling GMP and indirectly, cGMP. The sequence is that of Guanylate kinase from Francisella tularensis subsp. holarctica (strain LVS).